The chain runs to 739 residues: Prolyl 3-hydroxylase 1 (739 aa).

A signal peptide spans 1–25; it reads MAVSERRLLAAMLAVAAAAALRVAA. TPR repeat units follow at residues 36-69, 146-179, 208-241, and 304-337; these read PDLL…RAAL, RSPY…NPEH, HMHE…YFVA, and PSHY…FPND. A glycan (N-linked (GlcNAc...) asparagine) is linked at Asn319. Residues 404–442 adopt a coiled-coil conformation; that stretch reads KRLQEKQKSERETAVRISQEIGNLMKEIETLVEEKTKES. Asn470 and Asn543 each carry an N-linked (GlcNAc...) asparagine glycan. One can recognise a Fe2OG dioxygenase domain in the interval 567 to 681; sequence SHLVCRTAIE…RCAIALWFTL (115 aa). Residues His590, Asp592, and His662 each coordinate Fe cation. The active site involves Arg672. The tract at residues 702-739 is disordered; the sequence is SPEEVDLPQEQPLPDQQGSPEPGEESLSDRGSLHKDEL. A compositionally biased stretch (low complexity) spans 709–718; it reads PQEQPLPDQQ. Basic and acidic residues predominate over residues 728–739; sequence LSDRGSLHKDEL. A Prevents secretion from ER motif is present at residues 736–739; it reads KDEL.

The protein belongs to the leprecan family. Requires Fe cation as cofactor. L-ascorbate serves as cofactor. Post-translationally, O-glycosylated; chondroitin sulfate.

The protein localises to the endoplasmic reticulum. Its subcellular location is the secreted. It is found in the extracellular space. The protein resides in the extracellular matrix. The catalysed reaction is L-prolyl-[collagen] + 2-oxoglutarate + O2 = trans-3-hydroxy-L-prolyl-[collagen] + succinate + CO2. Functionally, basement membrane-associated chondroitin sulfate proteoglycan (CSPG). Has prolyl 3-hydroxylase activity catalyzing the post-translational formation of 3-hydroxyproline in -Xaa-Pro-Gly- sequences in collagens, especially types IV and V. May be involved in the secretory pathway of cells. Has growth suppressive activity in fibroblasts. The polypeptide is Prolyl 3-hydroxylase 1 (Mus musculus (Mouse)).